The primary structure comprises 258 residues: Small ribosomal subunit protein mS40 (258 aa).

Residues 1–35 (MAASVLNTLLRRLPMLSLFRGAHRVQVPLQTLCTK) constitute a mitochondrion transit peptide. 2 positions are modified to phosphoserine: serine 38 and serine 49. A disordered region spans residues 218 to 258 (RLYQGHLREESGPPPESMPKMPPTAPAEASFTGQTDPQSAL). Residues 229 to 242 (GPPPESMPKMPPTA) are compositionally biased toward pro residues. Residues 248-258 (FTGQTDPQSAL) show a composition bias toward polar residues.

The protein belongs to the bacterial ribosomal protein bS18 family. Mitochondrion-specific ribosomal protein mS40 subfamily. Component of the mitochondrial ribosome small subunit (28S) which comprises a 12S rRNA and about 30 distinct proteins.

It is found in the mitochondrion. The polypeptide is Small ribosomal subunit protein mS40 (MRPS18B) (Macaca mulatta (Rhesus macaque)).